Consider the following 475-residue polypeptide: NADP-dependent glyceraldehyde-3-phosphate dehydrogenase (475 aa).

Arg-103 provides a ligand contact to substrate. Ser-151 contributes to the NADP(+) binding site. Residue 154–155 (NY) coordinates substrate. Residues Lys-177, Thr-180, Asp-215, and 230–251 (GSTG…MLEL) each bind NADP(+). Residues Glu-250 and Cys-284 contribute to the active site. Residue 283–285 (RCT) coordinates substrate. Residue Glu-377 participates in NADP(+) binding. Arg-437 lines the substrate pocket.

It belongs to the aldehyde dehydrogenase family. In terms of assembly, homotetramer.

It catalyses the reaction D-glyceraldehyde 3-phosphate + NADP(+) + H2O = (2R)-3-phosphoglycerate + NADPH + 2 H(+). In Streptococcus mutans serotype c (strain ATCC 700610 / UA159), this protein is NADP-dependent glyceraldehyde-3-phosphate dehydrogenase (gapN).